The following is a 188-amino-acid chain: Inactive cysteine S-methyltransferase OspZ (188 aa).

This sequence belongs to the NleE/OspZ family.

The protein localises to the secreted. The protein resides in the host cytoplasm. It is found in the host nucleus. Inactive effector protein: in contrast to other members of the family, does not have the ability to inhibit host cell NF-kappa-B activation. Probably lacks cysteine S-methyltransferase activity due to its inability to bind S-adenosyl-L-methionine at the C-terminus. In Shigella flexneri, this protein is Inactive cysteine S-methyltransferase OspZ.